A 130-amino-acid polypeptide reads, in one-letter code: Organic solute transporter subunit beta (130 aa).

Topologically, residues 1 to 35 (MNYSEKLTGAPPMTEVPLELLEEMLWFFRVEDATP) are extracellular. Residues 36 to 56 (WNCSMFVLAALVAIISFILLG) traverse the membrane as a helical segment. Over 57–130 (RNIQANRNQK…HLPDPQEPES (74 aa)) the chain is Cytoplasmic. A disordered region spans residues 99-130 (LSEKPTLAQGEMEAKCSDVPRVHLPDPQEPES). Residues 110–124 (MEAKCSDVPRVHLPD) show a composition bias toward basic and acidic residues.

It belongs to the OST-beta family. Interacts with SLC51A. The Ost-alpha/Ost-beta complex is a heterodimer composed of alpha (SLC51A) and beta (SLC51B) subunit; induces the transport of SLC51A from the endoplasmic reticulum to the plasma membrane.

The protein localises to the cell membrane. It carries out the reaction taurocholate(out) = taurocholate(in). It catalyses the reaction estrone 3-sulfate(out) = estrone 3-sulfate(in). The catalysed reaction is dehydroepiandrosterone 3-sulfate(out) = dehydroepiandrosterone 3-sulfate(in). The enzyme catalyses tauroursodeoxycholate(out) = tauroursodeoxycholate(in). It carries out the reaction glycoursodeoxycholate(out) = glycoursodeoxycholate(in). It catalyses the reaction glycocholate(out) = glycocholate(in). The catalysed reaction is taurochenodeoxycholate(out) = taurochenodeoxycholate(in). The enzyme catalyses glycochenodeoxycholate(out) = glycochenodeoxycholate(in). It carries out the reaction taurodeoxycholate(out) = taurodeoxycholate(in). It catalyses the reaction glycodeoxycholate(out) = glycodeoxycholate(in). The catalysed reaction is prostaglandin E2(out) = prostaglandin E2(in). Functionally, essential component of the Ost-alpha/Ost-beta complex, a heterodimer that acts as the intestinal basolateral transporter responsible for bile acid export from enterocytes into portal blood. The Ost-alpha/Ost-beta complex efficiently transports the major species of bile acids (taurocholate). Taurine conjugates are transported more efficiently across the basolateral membrane than glycine-conjugated bile acids. Can also transport steroids such as estrone 3-sulfate and dehydroepiandrosterone 3-sulfate, therefore playing a role in the enterohepatic circulation of sterols. Able to transport eicosanoids such as prostaglandin E2. Modulates SLC51A glycosylation, membrane trafficking and stability activities. This chain is Organic solute transporter subunit beta (SLC51B), found in Bos taurus (Bovine).